We begin with the raw amino-acid sequence, 156 residues long: Putative pre-16S rRNA nuclease (156 aa).

The protein belongs to the YqgF nuclease family.

The protein resides in the cytoplasm. Its function is as follows. Could be a nuclease involved in processing of the 5'-end of pre-16S rRNA. The sequence is that of Putative pre-16S rRNA nuclease from Phenylobacterium zucineum (strain HLK1).